The primary structure comprises 433 residues: Tol-Pal system protein TolB (433 aa).

The first 26 residues, Met1 to Ala26, serve as a signal peptide directing secretion.

Belongs to the TolB family. The Tol-Pal system is composed of five core proteins: the inner membrane proteins TolA, TolQ and TolR, the periplasmic protein TolB and the outer membrane protein Pal. They form a network linking the inner and outer membranes and the peptidoglycan layer.

The protein localises to the periplasm. Functionally, part of the Tol-Pal system, which plays a role in outer membrane invagination during cell division and is important for maintaining outer membrane integrity. The chain is Tol-Pal system protein TolB from Burkholderia pseudomallei (strain 1710b).